Consider the following 226-residue polypeptide: 7-cyano-7-deazaguanine synthase (226 aa).

Residue 8–18 (LSGGLDSTTTL) participates in ATP binding. 4 residues coordinate Zn(2+): Cys188, Cys198, Cys201, and Cys204.

The protein belongs to the QueC family. It depends on Zn(2+) as a cofactor.

It carries out the reaction 7-carboxy-7-deazaguanine + NH4(+) + ATP = 7-cyano-7-deazaguanine + ADP + phosphate + H2O + H(+). It functions in the pathway purine metabolism; 7-cyano-7-deazaguanine biosynthesis. Functionally, catalyzes the ATP-dependent conversion of 7-carboxy-7-deazaguanine (CDG) to 7-cyano-7-deazaguanine (preQ(0)). The sequence is that of 7-cyano-7-deazaguanine synthase from Nitrosomonas eutropha (strain DSM 101675 / C91 / Nm57).